A 1194-amino-acid polypeptide reads, in one-letter code: Multidrug efflux ATP-binding/permease protein BCG_0231 (1194 aa).

The next 6 membrane-spanning stretches (helical) occupy residues 20–40 (LLLGFGAALAGTVIAVLVPLV), 56–76 (LAPWAVVLVAAAGATYLLTYV), 130–150 (LLFDVPNVLRHVLTLLLGVAV), 153–173 (WLSVPLALLAVLLVPVIGLIA), 258–278 (FALGGWMAAQGSITVGTFVAF), and 279–299 (WACLTLLARPACDLAGMLTIA). The ABC transmembrane type-1 1 domain maps to 21–301 (LLGFGAALAG…LAGMLTIAQQ (281 aa)). The ABC transporter 1 domain occupies 334–568 (LEFQRVSFGY…CPRYRELLSP (235 aa)). 367–374 (GAPGSGKS) lines the ATP pocket. 6 helical membrane passes run 628 to 648 (ALSLLLVAVQTCAGLLPPLLI), 660 to 680 (VLSALWWAALAGTATVVIRWV), 743 to 763 (LVVAVISVVTLVGILVALLAI), 765 to 785 (ARLVLLIFTTMPVLALATWQF), 847 to 867 (LLALYYPFVALLCSLATTLVL), and 878 to 898 (VISVGALVTYLLYIELLYTPI). The ABC transmembrane type-1 2 domain occupies 628–910 (ALSLLLVAVQ…LAQMFDDYQR (283 aa)). One can recognise an ABC transporter 2 domain in the interval 942-1177 (VVFDAVHYSY…GGHYSRLWAA (236 aa)). 976–983 (GSTGSGKS) is a binding site for ATP.

Belongs to the ABC transporter superfamily. Lipid exporter (TC 3.A.1.106) family.

It is found in the cell inner membrane. Functionally, overexpression increases resistance to chloramphenicol, ampicillin, streptomycin, tetracyclin and vancomycin. This chain is Multidrug efflux ATP-binding/permease protein BCG_0231, found in Mycobacterium bovis (strain BCG / Pasteur 1173P2).